The primary structure comprises 372 residues: Silphinene synthase peniA (372 aa).

5 residues coordinate Mg(2+): D116, E121, N263, S267, and E271. Positions 116–121 (DDQFDE) match the DDXXE motif motif.

This sequence belongs to the terpene synthase family. Requires Mg(2+) as cofactor.

It catalyses the reaction (2E,6E)-farnesyl diphosphate = silphinene + diphosphate. The protein operates within secondary metabolite biosynthesis; terpenoid biosynthesis. Sesquiterpene cyclase; part of the gene cluster that mediates the biosynthesis of penifulvin A, a potent insecticidal sesquiterpene that features a [5.5.5.6]dioxafenestrane ring. Within the pathway, peniA catalyzes the first step and generates the angular triquinane scaffold silphinene via cyclization of the linear farnesyl pyrophosphate (FPP). The cytochrome P450 monooxygenase peniB and the flavin-dependent monooxygenase peniC then catalyze a series of oxidation reactions to transform silphinene into penifulvin A. This is Silphinene synthase peniA from Penicillium patulum (Penicillium griseofulvum).